The chain runs to 495 residues: Bifunctional protein GlmU (495 aa).

The pyrophosphorylase stretch occupies residues 1–241 (MPQQTAVVVL…AAKVTGVNDR (241 aa)). UDP-N-acetyl-alpha-D-glucosamine-binding positions include 10-13 (LAAG), Lys-24, Gln-81, and 86-87 (GT). A Mg(2+)-binding site is contributed by Asp-112. UDP-N-acetyl-alpha-D-glucosamine is bound by residues Gly-151, Glu-166, Asn-181, and Asn-239. Asn-239 lines the Mg(2+) pocket. Residues 242–262 (VQLSIATRTMNRYILERHMRA) are linker. An N-acetyltransferase region spans residues 263–495 (GVTIIDPAST…QATEQKDGEQ (233 aa)). UDP-N-acetyl-alpha-D-glucosamine contacts are provided by Arg-344 and Lys-362. The Proton acceptor role is filled by His-374. Residues Tyr-377 and Asn-388 each contribute to the UDP-N-acetyl-alpha-D-glucosamine site. Residues Ala-391, 397-398 (NY), Ser-416, and Ala-434 contribute to the acetyl-CoA site. Residues 467–495 (GTAAATAAAQALAADEKSSQATEQKDGEQ) are disordered. A compositionally biased stretch (low complexity) spans 468-479 (TAAATAAAQALA). A compositionally biased stretch (basic and acidic residues) spans 480 to 495 (ADEKSSQATEQKDGEQ).

It in the N-terminal section; belongs to the N-acetylglucosamine-1-phosphate uridyltransferase family. This sequence in the C-terminal section; belongs to the transferase hexapeptide repeat family. In terms of assembly, homotrimer. Requires Mg(2+) as cofactor.

It localises to the cytoplasm. It carries out the reaction alpha-D-glucosamine 1-phosphate + acetyl-CoA = N-acetyl-alpha-D-glucosamine 1-phosphate + CoA + H(+). It catalyses the reaction N-acetyl-alpha-D-glucosamine 1-phosphate + UTP + H(+) = UDP-N-acetyl-alpha-D-glucosamine + diphosphate. It participates in nucleotide-sugar biosynthesis; UDP-N-acetyl-alpha-D-glucosamine biosynthesis; N-acetyl-alpha-D-glucosamine 1-phosphate from alpha-D-glucosamine 6-phosphate (route II): step 2/2. The protein operates within nucleotide-sugar biosynthesis; UDP-N-acetyl-alpha-D-glucosamine biosynthesis; UDP-N-acetyl-alpha-D-glucosamine from N-acetyl-alpha-D-glucosamine 1-phosphate: step 1/1. Its pathway is bacterial outer membrane biogenesis; LPS lipid A biosynthesis. Functionally, catalyzes the last two sequential reactions in the de novo biosynthetic pathway for UDP-N-acetylglucosamine (UDP-GlcNAc). The C-terminal domain catalyzes the transfer of acetyl group from acetyl coenzyme A to glucosamine-1-phosphate (GlcN-1-P) to produce N-acetylglucosamine-1-phosphate (GlcNAc-1-P), which is converted into UDP-GlcNAc by the transfer of uridine 5-monophosphate (from uridine 5-triphosphate), a reaction catalyzed by the N-terminal domain. In Nocardia farcinica (strain IFM 10152), this protein is Bifunctional protein GlmU.